The chain runs to 705 residues: 1,4-alpha-glucan branching enzyme GlgB (705 aa).

Catalysis depends on aspartate 393, which acts as the Nucleophile. The active-site Proton donor is glutamate 446.

It belongs to the glycosyl hydrolase 13 family. GlgB subfamily. As to quaternary structure, monomer.

The enzyme catalyses Transfers a segment of a (1-&gt;4)-alpha-D-glucan chain to a primary hydroxy group in a similar glucan chain.. The protein operates within glycan biosynthesis; glycogen biosynthesis. In terms of biological role, catalyzes the formation of the alpha-1,6-glucosidic linkages in glycogen by scission of a 1,4-alpha-linked oligosaccharide from growing alpha-1,4-glucan chains and the subsequent attachment of the oligosaccharide to the alpha-1,6 position. The chain is 1,4-alpha-glucan branching enzyme GlgB from Picrophilus torridus (strain ATCC 700027 / DSM 9790 / JCM 10055 / NBRC 100828 / KAW 2/3).